Reading from the N-terminus, the 364-residue chain is Molybdenum import ATP-binding protein ModC (364 aa).

Residues 1–229 (MLLIDIKKQL…PLMRPWLNAS (229 aa)) form the ABC transporter domain. 31–38 (GRSGAGKS) is a binding site for ATP. Residues 293-360 (HSSIRNILPV…IKGVSVTQSD (68 aa)) enclose the Mop domain.

Belongs to the ABC transporter superfamily. Molybdate importer (TC 3.A.1.8) family. As to quaternary structure, the complex is composed of two ATP-binding proteins (ModC), two transmembrane proteins (ModB) and a solute-binding protein (ModA).

Its subcellular location is the cell inner membrane. The catalysed reaction is molybdate(out) + ATP + H2O = molybdate(in) + ADP + phosphate + H(+). In terms of biological role, part of the ABC transporter complex ModABC involved in molybdenum import. Responsible for energy coupling to the transport system. The sequence is that of Molybdenum import ATP-binding protein ModC from Aliivibrio fischeri (strain ATCC 700601 / ES114) (Vibrio fischeri).